A 398-amino-acid chain; its full sequence is S-adenosylmethionine synthase (398 aa).

His17 lines the ATP pocket. Position 19 (Asp19) interacts with Mg(2+). Glu45 serves as a coordination point for K(+). L-methionine is bound by residues Glu58 and Gln101. Positions 101–111 are flexible loop; sequence QSPDIAQGVDT. Residues 176–178, 243–244, Asp252, 258–259, and Lys279 each bind ATP; these read DGK, RF, and RK. Asp252 contacts L-methionine. Lys283 serves as a coordination point for L-methionine.

This sequence belongs to the AdoMet synthase family. Homotetramer; dimer of dimers. Requires Mg(2+) as cofactor. It depends on K(+) as a cofactor.

It localises to the cytoplasm. The enzyme catalyses L-methionine + ATP + H2O = S-adenosyl-L-methionine + phosphate + diphosphate. It functions in the pathway amino-acid biosynthesis; S-adenosyl-L-methionine biosynthesis; S-adenosyl-L-methionine from L-methionine: step 1/1. Functionally, catalyzes the formation of S-adenosylmethionine (AdoMet) from methionine and ATP. The overall synthetic reaction is composed of two sequential steps, AdoMet formation and the subsequent tripolyphosphate hydrolysis which occurs prior to release of AdoMet from the enzyme. This Staphylococcus saprophyticus subsp. saprophyticus (strain ATCC 15305 / DSM 20229 / NCIMB 8711 / NCTC 7292 / S-41) protein is S-adenosylmethionine synthase.